The primary structure comprises 259 residues: MTGHYSKTEHQYILLTSESASFDHYSVYRDPQLPQIFSHNFVQLHDTFPLERLLNFLPSVPKLLDANYLHLKASPQHVFPLGLKQSLVKSGFVVEDELLYDMKLSDWKGQMGHPLTAWGTAKSLSDGSSIMKIYDSIYIGEAIAEQKLKRKYPFYEADIIILVVCYSDQAQKVPIGCGELFIDHQEKTAKIEEVAILDQFQRKGYGSILVKEMLSIAKSLGMEAAYLVAASTDGATQFYEKLTFKKYERVHTVFHYFLT.

In terms of domain architecture, N-acetyltransferase spans 110-259 (QMGHPLTAWG…VHTVFHYFLT (150 aa)).

Its function is as follows. May be involved in maturation of the outermost layer of the spore. This is an uncharacterized protein from Bacillus subtilis (strain 168).